A 164-amino-acid chain; its full sequence is Lipoprotein signal peptidase (164 aa).

The next 4 helical transmembrane spans lie at 11–31 (YWVL…AVLS), 41–61 (VIPS…FSFL), 64–84 (QGGW…AYLV), and 92–112 (FATL…GNVI). Residues Asp-122 and Asp-140 contribute to the active site. The helical transmembrane segment at 132–152 (FYPAFNIADSFICVGAVLAVL) threads the bilayer.

The protein belongs to the peptidase A8 family.

It localises to the cell inner membrane. It carries out the reaction Release of signal peptides from bacterial membrane prolipoproteins. Hydrolyzes -Xaa-Yaa-Zaa-|-(S,diacylglyceryl)Cys-, in which Xaa is hydrophobic (preferably Leu), and Yaa (Ala or Ser) and Zaa (Gly or Ala) have small, neutral side chains.. It functions in the pathway protein modification; lipoprotein biosynthesis (signal peptide cleavage). In terms of biological role, this protein specifically catalyzes the removal of signal peptides from prolipoproteins. This is Lipoprotein signal peptidase from Neisseria meningitidis serogroup C (strain 053442).